A 385-amino-acid chain; its full sequence is Putative ESX-1 scaffolding and assembly protein SaeC (385 aa).

It is found in the cytoplasm. In terms of biological role, may be involved in assembly of the ESX-1 / type VII specialized secretion system (T7SS), which exports several proteins including EsxA and EsxB. Involved in DNA conjugation in recipient (MKD8) strain. This is Putative ESX-1 scaffolding and assembly protein SaeC from Mycolicibacterium smegmatis (strain ATCC 700084 / mc(2)155) (Mycobacterium smegmatis).